The sequence spans 438 residues: RING finger protein 150 (438 aa).

Residues 1-34 form the signal peptide; it reads MAMSLIQACCSLALSTWLLSFCFVHLLCLDFTVA. The Extracellular segment spans residues 35-208; it reads EKEEWYTAFV…NLQKYVSRTS (174 aa). 4 N-linked (GlcNAc...) asparagine glycosylation sites follow: Asn-45, Asn-125, Asn-153, and Asn-186. A PA domain is found at 81–183; sequence SPKQDARGEV…PKGKEIVSLL (103 aa). The chain crosses the membrane as a helical span at residues 209 to 229; it reads VVFVSISFIVLMIISLAWLVF. Over 230–438 the chain is Cytoplasmic; it reads YYIQRFRYAN…TDQDCEEVKS (209 aa). An RING-type; atypical zinc finger spans residues 278–319; it reads CAVCIEGYKPNDVVRILPCRHLFHKSCVDPWLLDHRTCPMCK.

It localises to the membrane. This Homo sapiens (Human) protein is RING finger protein 150 (RNF150).